The sequence spans 246 residues: Flagellar L-ring protein (246 aa).

Positions 1 to 20 (MMQKCLSPKTLIAALVVLSA) are cleaved as a signal peptide. The N-palmitoyl cysteine moiety is linked to residue cysteine 21. Cysteine 21 carries S-diacylglycerol cysteine lipidation.

It belongs to the FlgH family. The basal body constitutes a major portion of the flagellar organelle and consists of four rings (L,P,S, and M) mounted on a central rod.

It localises to the cell outer membrane. The protein resides in the bacterial flagellum basal body. In terms of biological role, assembles around the rod to form the L-ring and probably protects the motor/basal body from shearing forces during rotation. The polypeptide is Flagellar L-ring protein (Ruegeria pomeroyi (strain ATCC 700808 / DSM 15171 / DSS-3) (Silicibacter pomeroyi)).